The chain runs to 328 residues: L-lactate dehydrogenase (328 aa).

Residues Val18, Glu39, Lys46, Tyr71, and 85-86 contribute to the NAD(+) site; that span reads GA. Positions 88 and 94 each coordinate substrate. NAD(+) contacts are provided by residues Ser107, 124–126, and Ser149; that span reads AAN. A substrate-binding site is contributed by 126 to 129; sequence NPVD. Residue 154–157 coordinates substrate; sequence DSAR. 2 residues coordinate beta-D-fructose 1,6-bisphosphate: Arg159 and His174. The active-site Proton acceptor is His181. Tyr226 is subject to Phosphotyrosine. Substrate is bound at residue Thr235.

Belongs to the LDH/MDH superfamily. LDH family. In terms of assembly, homotetramer.

The protein localises to the cytoplasm. The enzyme catalyses (S)-lactate + NAD(+) = pyruvate + NADH + H(+). Its pathway is fermentation; pyruvate fermentation to lactate; (S)-lactate from pyruvate: step 1/1. Its activity is regulated as follows. Allosterically activated by fructose 1,6-bisphosphate (FBP). Catalyzes the conversion of lactate to pyruvate. This is L-lactate dehydrogenase from Streptococcus thermophilus (strain ATCC BAA-250 / LMG 18311).